A 125-amino-acid chain; its full sequence is Cytochrome c oxidase assembly factor 6 homolog (125 aa).

At glycine 2 the chain carries N-acetylalanine. A CHCH domain is found at 55 to 98 (RQVCWGARDEYWKCLDENLEDASQCKKLRSSFESSCPQQWIKYF). A Cx9C motif motif is present at residues 58 to 68 (CWGARDEYWKC). Disulfide bonds link cysteine 58/cysteine 90 and cysteine 68/cysteine 79. Residues 79-90 (CKKLRSSFESSC) carry the Cx10C motif motif.

This sequence belongs to the cytochrome c oxidase subunit 6B family. In terms of assembly, interacts with COA1. Found in a complex with TMEM177, COX20, MT-CO2/COX2, COX18, SCO1 and SCO2. Interacts with MT-CO2/COX2 and SCO2. Interacts with SCO1. Interacts with COX20 in a MT-CO2/COX2- and COX18-dependent manner. Interacts with COX16.

It localises to the mitochondrion intermembrane space. Its function is as follows. Involved in the maturation of the mitochondrial respiratory chain complex IV subunit MT-CO2/COX2. Thereby, may regulate early steps of complex IV assembly. Mitochondrial respiratory chain complex IV or cytochrome c oxidase is the component of the respiratory chain that catalyzes the transfer of electrons from intermembrane space cytochrome c to molecular oxygen in the matrix and as a consequence contributes to the proton gradient involved in mitochondrial ATP synthesis. May also be required for efficient formation of respiratory supercomplexes comprised of complexes III and IV. In Homo sapiens (Human), this protein is Cytochrome c oxidase assembly factor 6 homolog (COA6).